The chain runs to 366 residues: Trans-enoyl reductase caaB (366 aa).

The Enoyl reductase (ER) domain maps to 19-363 (GAGQLSIYHD…RQTVSGHKLV (345 aa)). An NADP(+)-binding site is contributed by Y219.

The protein belongs to the zinc-containing alcohol dehydrogenase family. Monomer.

It participates in secondary metabolite biosynthesis. Functionally, trans-enoyl reductase; part of the gene cluster that produces the acyltetronic acid derivatives carlosic acid, agglomerin F and carlosic acid methyl ether. The PKS domains of caaA condenses two malonyl-CoAs into an acetyl starter unit, and form 1,3-diketohexanyl-ACP with the help of the trans-enoyl reductase caaB. Next, the C domain of caaA forms the ester bond between the acyl chain and L-malic acid (derived from the TCA cycle) and accepted by the A domain instead of an amino acid. Finally, the terminal reductase/Dieckmann cyclization (R/DKC) domain cyclizes the intermediate and releases the product as carlosic acid. Decarboxylation of carlosic acid followed by formation of the exocyclic double bond is likely to be catalyzed by the cytochrome P450 monooxygenase caaC. Thus, decarboxylation and oxidation would be coupled (performed by one enzyme) through concomitant abstraction of the hydrogen at C-4. Finally, sequential oxidations of the terminal C-10 methyl group to form carboxylic acid would be catalyzed by the 2-oxoglutarate-dependent dioxygenase caaD, which is required for the biosynthesis of agglomerin F. The polypeptide is Trans-enoyl reductase caaB (Aspergillus niger (strain ATCC MYA-4892 / CBS 513.88 / FGSC A1513)).